A 401-amino-acid polypeptide reads, in one-letter code: S-adenosylmethionine synthase (401 aa).

Residue 135–140 (GHGSGD) participates in ATP binding.

The protein belongs to the AdoMet synthase 2 family. It depends on Mg(2+) as a cofactor.

The enzyme catalyses L-methionine + ATP + H2O = S-adenosyl-L-methionine + phosphate + diphosphate. Its pathway is amino-acid biosynthesis; S-adenosyl-L-methionine biosynthesis; S-adenosyl-L-methionine from L-methionine: step 1/1. Its function is as follows. Catalyzes the formation of S-adenosylmethionine from methionine and ATP. This chain is S-adenosylmethionine synthase (mat), found in Methanothermobacter thermautotrophicus (strain ATCC 29096 / DSM 1053 / JCM 10044 / NBRC 100330 / Delta H) (Methanobacterium thermoautotrophicum).